Reading from the N-terminus, the 191-residue chain is GDP-mannose pyrophosphatase (191 aa).

GDP-alpha-D-mannose contacts are provided by residues Y17, 38–40 (KRE), R67, and 85–87 (AGL). Residues 43 to 180 (DRGNGATILL…EIRDGKTVLL (138 aa)) form the Nudix hydrolase domain. 3 residues coordinate Mg(2+): A85, E100, and E104. A Nudix box motif is present at residues 86–106 (GLLDNDEPEVCIRKEAIEETG). GDP-alpha-D-mannose-binding positions include E104, E127, 150–151 (DE), and K176. E151 is a Mg(2+) binding site.

Belongs to the Nudix hydrolase family. NudK subfamily. Homodimer. Mg(2+) serves as cofactor.

The enzyme catalyses GDP-alpha-D-mannose + H2O = alpha-D-mannose 1-phosphate + GMP + 2 H(+). Its function is as follows. Nucleoside diphosphate sugar hydrolase that hydrolyzes GDP-mannose as its preferred substrate, yielding GMP and mannose-1-phosphate. The polypeptide is GDP-mannose pyrophosphatase (nudK) (Escherichia coli (strain UTI89 / UPEC)).